The primary structure comprises 73 residues: Large ribosomal subunit protein bL31 (73 aa).

Belongs to the bacterial ribosomal protein bL31 family. Type A subfamily. As to quaternary structure, part of the 50S ribosomal subunit.

Binds the 23S rRNA. This is Large ribosomal subunit protein bL31 from Ruegeria sp. (strain TM1040) (Silicibacter sp.).